The chain runs to 216 residues: MOB kinase activator 1B (216 aa).

S2 carries the post-translational modification N-acetylserine. Phosphothreonine; by STK4/MST1 is present on residues T12 and T35. Residues C79, C84, H161, and H166 each coordinate Zn(2+).

It belongs to the MOB1/phocein family. In terms of assembly, binds STK38L. Interacts with LATS1 and LATS2. Post-translationally, phosphorylated by STK3/MST2 and STK4/MST1 and this phosphorylation enhances its binding to LATS1. In terms of tissue distribution, adrenal gland, bone marrow, brain, lung, placenta, prostate, salivary gland, skeletal muscle, testis, thymus, thyroid gland, uterus, colon with mucosa, fetal brain and fetal liver.

It is found in the cytoplasm. It localises to the nucleus. Functionally, activator of LATS1/2 in the Hippo signaling pathway which plays a pivotal role in organ size control and tumor suppression by restricting proliferation and promoting apoptosis. The core of this pathway is composed of a kinase cascade wherein STK3/MST2 and STK4/MST1, in complex with its regulatory protein SAV1, phosphorylates and activates LATS1/2 in complex with its regulatory protein MOB1, which in turn phosphorylates and inactivates YAP1 oncoprotein and WWTR1/TAZ. Phosphorylation of YAP1 by LATS1/2 inhibits its translocation into the nucleus to regulate cellular genes important for cell proliferation, cell death, and cell migration. Stimulates the kinase activity of STK38L. This Homo sapiens (Human) protein is MOB kinase activator 1B.